The chain runs to 333 residues: Homocysteine S-methyltransferase 2 (333 aa).

A Hcy-binding domain is found at 8 to 327; the sequence is SMKDFLKQTG…TTIRAIHKRL (320 aa). Zn(2+) contacts are provided by cysteine 245, cysteine 312, and cysteine 313.

As to quaternary structure, monomer. Requires Zn(2+) as cofactor. As to expression, expressed predominantly in roots. Expressed in rosette leaves, cauline leaves and developing seeds.

It carries out the reaction S-methyl-L-methionine + L-homocysteine = 2 L-methionine + H(+). In terms of biological role, catalyzes methyl transfer from S-methylmethionine (SMM) to adenosyl-L-homocysteine (AdoMet). SMM degradation (by HMT-1, HMT-2 and HMT-3) and biosynthesis (by MMT1) constitute the SMM cycle in plants, which is probably required to achieve short term control of AdoMet level. The chain is Homocysteine S-methyltransferase 2 (HMT-2) from Arabidopsis thaliana (Mouse-ear cress).